The following is a 273-amino-acid chain: 5-deoxy-glucuronate isomerase (273 aa).

This sequence belongs to the isomerase IolB family.

The enzyme catalyses 5-deoxy-D-glucuronate = 5-dehydro-2-deoxy-D-gluconate. The protein operates within polyol metabolism; myo-inositol degradation into acetyl-CoA; acetyl-CoA from myo-inositol: step 4/7. Functionally, involved in the isomerization of 5-deoxy-glucuronate (5DG) to 5-dehydro-2-deoxy-D-gluconate (DKG or 2-deoxy-5-keto-D-gluconate). This is 5-deoxy-glucuronate isomerase from Listeria monocytogenes serotype 4a (strain HCC23).